The chain runs to 78 residues: Acyl carrier protein (78 aa).

A Carrier domain is found at 2 to 77 (STIEERVKKI…AAIDYIEAAN (76 aa)). Ser-37 carries the O-(pantetheine 4'-phosphoryl)serine modification.

The protein belongs to the acyl carrier protein (ACP) family. In terms of processing, 4'-phosphopantetheine is transferred from CoA to a specific serine of apo-ACP by AcpS. This modification is essential for activity because fatty acids are bound in thioester linkage to the sulfhydryl of the prosthetic group.

The protein resides in the cytoplasm. It functions in the pathway lipid metabolism; fatty acid biosynthesis. In terms of biological role, carrier of the growing fatty acid chain in fatty acid biosynthesis. The chain is Acyl carrier protein from Edwardsiella ictaluri (strain 93-146).